The primary structure comprises 183 residues: uncharacterized protein (183 aa).

It belongs to the asfivirus S183L family.

This is an uncharacterized protein from Ornithodoros (relapsing fever ticks).